We begin with the raw amino-acid sequence, 752 residues long: DNA topoisomerase 4 subunit A (752 aa).

The region spanning 31–494 (LPFIGDGLKP…EAKAMSEHDM (464 aa)) is the Topo IIA-type catalytic domain. Tyr120 (O-(5'-phospho-DNA)-tyrosine intermediate) is an active-site residue. Disordered stretches follow at residues 472-492 (YGDDRRSPLQEREEAKAMSEH) and 718-752 (TGERGRRGTLMRGLQRIDRVEIDSPRRASSGDSEE). Composition is skewed to basic and acidic residues over residues 473-492 (GDDRRSPLQEREEAKAMSEH) and 732-743 (QRIDRVEIDSPR).

This sequence belongs to the type II topoisomerase GyrA/ParC subunit family. ParC type 1 subfamily. In terms of assembly, heterotetramer composed of ParC and ParE.

Its subcellular location is the cell membrane. It catalyses the reaction ATP-dependent breakage, passage and rejoining of double-stranded DNA.. Functionally, topoisomerase IV is essential for chromosome segregation. It relaxes supercoiled DNA. Performs the decatenation events required during the replication of a circular DNA molecule. The polypeptide is DNA topoisomerase 4 subunit A (Escherichia coli O157:H7).